Consider the following 208-residue polypeptide: Thiamine-phosphate synthase (208 aa).

4-amino-2-methyl-5-(diphosphooxymethyl)pyrimidine contacts are provided by residues 37 to 39 (QVR) and N70. The Mg(2+) site is built by D71 and D90. Residue T109 participates in 4-amino-2-methyl-5-(diphosphooxymethyl)pyrimidine binding. Residue 135 to 137 (TTS) participates in 2-[(2R,5Z)-2-carboxy-4-methylthiazol-5(2H)-ylidene]ethyl phosphate binding. Residue K138 coordinates 4-amino-2-methyl-5-(diphosphooxymethyl)pyrimidine. G166 contributes to the 2-[(2R,5Z)-2-carboxy-4-methylthiazol-5(2H)-ylidene]ethyl phosphate binding site.

The protein belongs to the thiamine-phosphate synthase family. Mg(2+) is required as a cofactor.

It catalyses the reaction 2-[(2R,5Z)-2-carboxy-4-methylthiazol-5(2H)-ylidene]ethyl phosphate + 4-amino-2-methyl-5-(diphosphooxymethyl)pyrimidine + 2 H(+) = thiamine phosphate + CO2 + diphosphate. The catalysed reaction is 2-(2-carboxy-4-methylthiazol-5-yl)ethyl phosphate + 4-amino-2-methyl-5-(diphosphooxymethyl)pyrimidine + 2 H(+) = thiamine phosphate + CO2 + diphosphate. The enzyme catalyses 4-methyl-5-(2-phosphooxyethyl)-thiazole + 4-amino-2-methyl-5-(diphosphooxymethyl)pyrimidine + H(+) = thiamine phosphate + diphosphate. It functions in the pathway cofactor biosynthesis; thiamine diphosphate biosynthesis; thiamine phosphate from 4-amino-2-methyl-5-diphosphomethylpyrimidine and 4-methyl-5-(2-phosphoethyl)-thiazole: step 1/1. Condenses 4-methyl-5-(beta-hydroxyethyl)thiazole monophosphate (THZ-P) and 2-methyl-4-amino-5-hydroxymethyl pyrimidine pyrophosphate (HMP-PP) to form thiamine monophosphate (TMP). This chain is Thiamine-phosphate synthase, found in Salinispora arenicola (strain CNS-205).